The sequence spans 310 residues: Light-independent protochlorophyllide reductase iron-sulfur ATP-binding protein (310 aa).

ATP-binding positions include 53–58 and Lys82; that span reads GIGKST. Residue Ser57 participates in Mg(2+) binding. The [4Fe-4S] cluster site is built by Cys138 and Cys172. ATP contacts are provided by residues 223-224 and 247-249; these read NR and PAL.

Belongs to the NifH/BchL/ChlL family. In terms of assembly, homodimer. Protochlorophyllide reductase is composed of three subunits; BchL, BchN and BchB. It depends on [4Fe-4S] cluster as a cofactor.

The catalysed reaction is chlorophyllide a + oxidized 2[4Fe-4S]-[ferredoxin] + 2 ADP + 2 phosphate = protochlorophyllide a + reduced 2[4Fe-4S]-[ferredoxin] + 2 ATP + 2 H2O. It participates in porphyrin-containing compound metabolism; bacteriochlorophyll biosynthesis (light-independent). In terms of biological role, component of the dark-operative protochlorophyllide reductase (DPOR) that uses Mg-ATP and reduced ferredoxin to reduce ring D of protochlorophyllide (Pchlide) to form chlorophyllide a (Chlide). This reaction is light-independent. The L component serves as a unique electron donor to the NB-component of the complex, and binds Mg-ATP. This is Light-independent protochlorophyllide reductase iron-sulfur ATP-binding protein from Rhodopseudomonas palustris (strain BisA53).